The chain runs to 265 residues: Deoxycytidine kinase 1 (265 aa).

An ATP-binding site is contributed by Gly30–Thr38. 3 residues coordinate substrate: Glu55, Tyr88, and Gln99. Residue Glu129 is the Proton acceptor of the active site. 2 residues coordinate substrate: Arg130 and Asp135. Arg190 to Arg194 is a binding site for ATP. Residue Glu199 coordinates substrate. Glu242–Phe244 lines the ATP pocket.

This sequence belongs to the DCK/DGK family. As to quaternary structure, homodimer.

It localises to the nucleus. It catalyses the reaction 2'-deoxycytidine + a ribonucleoside 5'-triphosphate = dCMP + a ribonucleoside 5'-diphosphate + H(+). It carries out the reaction 2'-deoxyguanosine + ATP = dGMP + ADP + H(+). The catalysed reaction is 2'-deoxyadenosine + ATP = dAMP + ADP + H(+). Phosphorylates the deoxyribonucleosides deoxyadenosine, deoxycytidine and deoxyguanosine with highest activity against deoxycytidine followed by deadenosine and deoxyguanosine. Shows only very minor activity against deoxyuridine and deoxythymidine. In Xenopus laevis (African clawed frog), this protein is Deoxycytidine kinase 1.